Consider the following 120-residue polypeptide: MDYEFLRDITGVVKVRMSMDHEAIGHWFNEEVKDNLALLDEVEQAARTVKGSERSWQRAGHEYTLWLDGEEVMIRANQLEFSGDEIEEGMSYYDEESLSLCGVEDFLQVVAAYREFMQQR.

Belongs to the UPF0231 family.

The sequence is that of UPF0231 protein KPK_4613 from Klebsiella pneumoniae (strain 342).